We begin with the raw amino-acid sequence, 488 residues long: Glutamate--tRNA ligase (488 aa).

Residues 16 to 26 (PSPTGEPHVGT) carry the 'HIGH' region motif. The short motif at 257 to 261 (KLSKR) is the 'KMSKS' region element. Lys260 serves as a coordination point for ATP.

It belongs to the class-I aminoacyl-tRNA synthetase family. Glutamate--tRNA ligase type 1 subfamily. Monomer.

The protein localises to the cytoplasm. It carries out the reaction tRNA(Glu) + L-glutamate + ATP = L-glutamyl-tRNA(Glu) + AMP + diphosphate. Functionally, catalyzes the attachment of glutamate to tRNA(Glu) in a two-step reaction: glutamate is first activated by ATP to form Glu-AMP and then transferred to the acceptor end of tRNA(Glu). The polypeptide is Glutamate--tRNA ligase (Rhizobium johnstonii (strain DSM 114642 / LMG 32736 / 3841) (Rhizobium leguminosarum bv. viciae)).